A 277-amino-acid polypeptide reads, in one-letter code: MEMO1 family protein MTH_45 (277 aa).

This sequence belongs to the MEMO1 family.

The protein is MEMO1 family protein MTH_45 of Methanothermobacter thermautotrophicus (strain ATCC 29096 / DSM 1053 / JCM 10044 / NBRC 100330 / Delta H) (Methanobacterium thermoautotrophicum).